The chain runs to 204 residues: ADP-ribosylation factor-like protein 15 (204 aa).

GTP is bound by residues 39 to 46 (GLTGSGKT), 82 to 86 (ELGGA), and 142 to 145 (NHQD).

Belongs to the small GTPase superfamily. Arf family.

This Homo sapiens (Human) protein is ADP-ribosylation factor-like protein 15 (ARL15).